The primary structure comprises 272 residues: Shikimate dehydrogenase (NADP(+)) (272 aa).

Residues 14 to 16 (SKS) and threonine 61 each bind shikimate. Catalysis depends on lysine 65, which acts as the Proton acceptor. Glutamate 77 contributes to the NADP(+) binding site. Asparagine 86 and aspartate 102 together coordinate shikimate. Residues 126-130 (GAGGA), 149-154 (NRTVSR), and methionine 213 contribute to the NADP(+) site. Tyrosine 215 lines the shikimate pocket. NADP(+) is bound at residue glycine 237.

Belongs to the shikimate dehydrogenase family. As to quaternary structure, homodimer.

It catalyses the reaction shikimate + NADP(+) = 3-dehydroshikimate + NADPH + H(+). It functions in the pathway metabolic intermediate biosynthesis; chorismate biosynthesis; chorismate from D-erythrose 4-phosphate and phosphoenolpyruvate: step 4/7. Involved in the biosynthesis of the chorismate, which leads to the biosynthesis of aromatic amino acids. Catalyzes the reversible NADPH linked reduction of 3-dehydroshikimate (DHSA) to yield shikimate (SA). The chain is Shikimate dehydrogenase (NADP(+)) from Shigella dysenteriae serotype 1 (strain Sd197).